A 466-amino-acid chain; its full sequence is 3-isopropylmalate dehydratase large subunit (466 aa).

Positions 347, 407, and 410 each coordinate [4Fe-4S] cluster.

The protein belongs to the aconitase/IPM isomerase family. LeuC type 1 subfamily. As to quaternary structure, heterodimer of LeuC and LeuD. Requires [4Fe-4S] cluster as cofactor.

It catalyses the reaction (2R,3S)-3-isopropylmalate = (2S)-2-isopropylmalate. It functions in the pathway amino-acid biosynthesis; L-leucine biosynthesis; L-leucine from 3-methyl-2-oxobutanoate: step 2/4. Catalyzes the isomerization between 2-isopropylmalate and 3-isopropylmalate, via the formation of 2-isopropylmaleate. This is 3-isopropylmalate dehydratase large subunit from Enterobacter sp. (strain 638).